We begin with the raw amino-acid sequence, 105 residues long: uncharacterized protein (105 aa).

The segment at 1–27 is disordered; sequence MSLKSWHPQSKTKRVGASEGNPQWGSG.

This is an uncharacterized protein from Homo sapiens (Human).